The sequence spans 560 residues: Chaperonin GroEL 2 (560 aa).

ATP-binding positions include 29–32 (TLGP), 86–90 (DGTTT), Gly-413, 478–480 (NAA), and Asp-494.

This sequence belongs to the chaperonin (HSP60) family. As to quaternary structure, forms a cylinder of 14 subunits composed of two heptameric rings stacked back-to-back. Interacts with the co-chaperonin GroES.

The protein localises to the cytoplasm. It catalyses the reaction ATP + H2O + a folded polypeptide = ADP + phosphate + an unfolded polypeptide.. Functionally, together with its co-chaperonin GroES, plays an essential role in assisting protein folding. The GroEL-GroES system forms a nano-cage that allows encapsulation of the non-native substrate proteins and provides a physical environment optimized to promote and accelerate protein folding. In Trichormus variabilis (strain ATCC 29413 / PCC 7937) (Anabaena variabilis), this protein is Chaperonin GroEL 2.